The chain runs to 312 residues: Methionyl-tRNA formyltransferase (312 aa).

(6S)-5,6,7,8-tetrahydrofolate is bound at residue 109 to 112; sequence SILP.

It belongs to the Fmt family.

It catalyses the reaction L-methionyl-tRNA(fMet) + (6R)-10-formyltetrahydrofolate = N-formyl-L-methionyl-tRNA(fMet) + (6S)-5,6,7,8-tetrahydrofolate + H(+). Functionally, attaches a formyl group to the free amino group of methionyl-tRNA(fMet). The formyl group appears to play a dual role in the initiator identity of N-formylmethionyl-tRNA by promoting its recognition by IF2 and preventing the misappropriation of this tRNA by the elongation apparatus. In Dictyoglomus thermophilum (strain ATCC 35947 / DSM 3960 / H-6-12), this protein is Methionyl-tRNA formyltransferase.